Reading from the N-terminus, the 259-residue chain is Protein LEAD-SENSITIVE 1 (259 aa).

The LRAT domain occupies 20–168 (YSWRTAYIYA…CKTALLVLEG (149 aa)). Catalysis depends on residues H30 and H42. C152 serves as the catalytic Acyl-thioester intermediate.

As to expression, highly expressed in inflorescences, siliques and stems, and, to a lower extent, in roots and leaves.

Its subcellular location is the cytoplasm. In terms of biological role, confers tolerance to lead ions (Pb) stress mediated by Pb(NO(3))(2) probably by promoting Pb accumulation leading to subsequent glutathione-dependent phytochelatin (PC) synthesis and related gene expression, including PDR12/ABCG40, GSH1, GSH2, GR1, GR2, PCS1 and PCS2. This Arabidopsis thaliana (Mouse-ear cress) protein is Protein LEAD-SENSITIVE 1.